A 215-amino-acid chain; its full sequence is MDAAGAPAPAPAPPAAPGSGRKELKIVIVGDGGCGKTSLLMVYSQGSFPEHYAPSVFEKYTASVTVGSKEVTLNLYDTAGQEDYDRLRPLSYQNTHLVLICYDVMNPTSYDNVLIKWFPEVTHFCRGIPMVLIGCKTDLRKDKEQLRKLRAAQLEPITYTQGQSACEQIRAALYLECSAKFRENVEDVFREAAKVALSALKKAQRQKQHRLCLLL.

Met-1 is subject to N-acetylmethionine. A GTP-binding site is contributed by 30–37 (GDGGCGKT). Residues 52–60 (YAPSVFEKY) carry the Effector region motif. GTP contacts are provided by residues 77–81 (DTAGQ) and 135–138 (CKTD). Cys-212 is subject to Cysteine methyl ester. Residue Cys-212 is the site of S-geranylgeranyl cysteine attachment. Residues 213-215 (LLL) constitute a propeptide, removed in mature form.

This sequence belongs to the small GTPase superfamily. Rho family.

Its subcellular location is the cell membrane. It localises to the cytoplasm. The protein resides in the cytoskeleton. Its function is as follows. Plasma membrane-associated small GTPase which cycles between an active GTP-bound and an inactive GDP-bound state. Causes the formation of thin, actin-rich surface projections called filopodia. Functions cooperatively with CDC42 and Rac to generate additional structures, increasing the diversity of actin-based morphology. This chain is Rho-related GTP-binding protein RhoF (RHOF), found in Bos taurus (Bovine).